We begin with the raw amino-acid sequence, 977 residues long: Ubiquitin-like modifier-activating enzyme 7 (977 aa).

The protein belongs to the ubiquitin-activating E1 family. In terms of processing, ubiquitinated by RNF170.

The protein resides in the cytoplasm. Its subcellular location is the nucleus. Its pathway is protein modification; protein ubiquitination. Its function is as follows. E1-activating enzyme that catalyzes the covalent conjugation of the ubiquitin-like protein product of ISG15 to additional interferons stimulated proteins (ISGs) as well as other cellular proteins such as P53 in a process termed protein ISGylation. Plays an essential role in antiviral immunity together with ISG15 by restricting the replication of many viruses including rabies virus, influenza virus, sindbis virus or rotavirus. The sequence is that of Ubiquitin-like modifier-activating enzyme 7 from Mus musculus (Mouse).